We begin with the raw amino-acid sequence, 257 residues long: Zinc transporter ZupT (257 aa).

Transmembrane regions (helical) follow at residues 5 to 25 (LILT…GVLG), 32 to 52 (LLAF…LMEM), and 61 to 81 (GMSP…YFGL). Asn-120 and Glu-123 together coordinate Fe(2+). Positions 123 and 148 each coordinate Zn(2+). The next 4 helical transmembrane spans lie at 137 to 157 (LGFG…LAVA), 171 to 191 (ILWA…AWLI), 195 to 215 (MISP…MVAL), and 236 to 256 (GVLC…TVGI). The Fe(2+) site is built by Asn-149, Glu-152, and Glu-181. Glu-152 is a binding site for Zn(2+).

It belongs to the ZIP transporter (TC 2.A.5) family. ZupT subfamily.

Its subcellular location is the cell inner membrane. It carries out the reaction Zn(2+)(in) = Zn(2+)(out). Functionally, mediates zinc uptake. May also transport other divalent cations. In Escherichia coli O81 (strain ED1a), this protein is Zinc transporter ZupT.